Consider the following 898-residue polypeptide: Probable LRR receptor-like serine/threonine-protein kinase At4g20450 (898 aa).

A signal peptide spans 1–24 (MEGIHKLIFLALIWIFLITNIVDA). Residues 25–535 (QDQQGFISLD…TGPGNNKKKL (511 aa)) are Extracellular-facing. 10 N-linked (GlcNAc...) asparagine glycosylation sites follow: Asn-40, Asn-52, Asn-98, Asn-247, Asn-253, Asn-420, Asn-443, Asn-465, Asn-484, and Asn-489. 3 LRR repeats span residues 455–477 (QLQKLDLSNNNLTGKVPEFLAKM), 479–501 (LLTFINLSGNNLSGSIPQSLLNM), and 505–526 (GLITLLYNGNNLCLDPSCESET). A helical transmembrane segment spans residues 536 to 556 (LVPILASAASVGIIIAVLLLV). Residues 557–898 (NILLLRKKKP…FGPEHIPDAR (342 aa)) lie on the Cytoplasmic side of the membrane. Thr-582 carries the post-translational modification Phosphothreonine. Residues 591–864 (NNFERPLGEG…QVANELQECL (274 aa)) enclose the Protein kinase domain. Residues 597–605 (LGEGGFGVV) and Lys-619 each bind ATP. Tyr-664 bears the Phosphotyrosine mark. Asp-716 (proton acceptor) is an active-site residue. The residue at position 750 (Ser-750) is a Phosphoserine. Thr-751 carries the phosphothreonine modification. At Tyr-764 the chain carries Phosphotyrosine. The disordered stretch occupies residues 864-898 (LLTENSRKGGRHDVDSKSSLEQSTSFGPEHIPDAR). The span at 868–881 (NSRKGGRHDVDSKS) shows a compositional bias: basic and acidic residues.

Belongs to the protein kinase superfamily. Ser/Thr protein kinase family.

Its subcellular location is the membrane. It catalyses the reaction L-seryl-[protein] + ATP = O-phospho-L-seryl-[protein] + ADP + H(+). The enzyme catalyses L-threonyl-[protein] + ATP = O-phospho-L-threonyl-[protein] + ADP + H(+). In Arabidopsis thaliana (Mouse-ear cress), this protein is Probable LRR receptor-like serine/threonine-protein kinase At4g20450.